A 1117-amino-acid chain; its full sequence is Leucine-rich repeats and immunoglobulin-like domains protein 3 (1117 aa).

An N-terminal signal peptide occupies residues M1–A24. The region spanning L38 to A74 is the LRRNT domain. LRR repeat units lie at residues W75–Q98, S99–S120, N122–A143, S146–Q168, L169–N189, T193–L214, Q216–G237, A240–G261, N264–G285, M288–F309, K312–G333, L336–G357, S360–F382, R387–G408, and T411–Q432. N156 carries an N-linked (GlcNAc...) asparagine glycan. The N-linked (GlcNAc...) asparagine glycan is linked to N274. Residues N442 and N469 are each glycosylated (N-linked (GlcNAc...) asparagine). One can recognise an LRRCT domain in the interval S444 to D495. 3 consecutive Ig-like C2-type domains span residues P499–T598, P603–T692, and P697–S783. Intrachain disulfides connect C520/C581 and C624/C676. N-linked (GlcNAc...) asparagine glycosylation is found at N688 and N729. Cysteines 718 and 767 form a disulfide. Residues V810–I830 traverse the membrane as a helical segment. N1014 is a glycosylation site (N-linked (GlcNAc...) asparagine). The disordered stretch occupies residues D1019–N1093. Residues D1083–N1093 are compositionally biased toward basic and acidic residues.

As to quaternary structure, interacts with EGFR, ERBB2 and ERBB4 (in vitro). Widely expressed.

The protein localises to the cell membrane. It localises to the cytoplasmic vesicle membrane. Its function is as follows. Plays a role in craniofacial and inner ear morphogenesis during embryonic development. Acts within the otic vesicle epithelium to control formation of the lateral semicircular canal in the inner ear, possibly by restricting the expression of NTN1. The chain is Leucine-rich repeats and immunoglobulin-like domains protein 3 (Lrig3) from Mus musculus (Mouse).